We begin with the raw amino-acid sequence, 680 residues long: MSARATRPRSRRGRHPLPGELDPVAESSEEVDANNGRFETKPELHQEYLGPGLQSPRNWIKEGCDVGSHAVLSLSPEEQCEPEVEAHQVLQEAPLDSGPAEISVPSVYETLQCRLSSLEAVVAALRHHSLSFPKSVEAEDRDQGAPGPFGDEKEDAGPGQQEAARLIERNAWLRLALCNREDELACTQASLQDAQAEKETLQRQVQELEDSLMQMEASPPTPILRAGRRNSNSSTSGAERRPWVPQDSSMAHPFLQRLRSDSSTQSFGCLSTQHPAPETYLMEDQMGQLQGSIEKLKCFNRLLLAVLQGYKGRCESLSIKLAKREAEATALRLALQYSEDCEEVYEVLLALKMAGLGTGVGTTKGDLQAAEKEASRLLMKKEATMEVETPQPSSEGSGVDKPTPEELASQLHGYVQHLRERWALVKIPEELGPVTAPKATMPHAEATVQAILEIQPGPTLPHLEKSQIQQDLAATRDRLADLVLRLQLTQREKRGLELREAALRAQGPAHQLLLQQLRWERAHFAGDGSSGGSSEDPSSEEEAGEDRQQHYQGPLALLDGQMGKVWDSENVSQELSASLARAIDLRAQLQSLRQQLEQVTQKGRTRRVQSAELSRELCKAHSALALAFRGAHRKQEEQRLKLEQQVARLQAQQAEELAVLTATARALGKPGAPQPAQTFL.

The span at 1–15 (MSARATRPRSRRGRH) shows a compositional bias: basic residues. Disordered regions lie at residues 1–51 (MSAR…YLGP) and 134–161 (KSVE…PGQQ). Residues 179 to 218 (NREDELACTQASLQDAQAEKETLQRQVQELEDSLMQMEAS) are a coiled coil. Disordered regions lie at residues 220–247 (PTPI…VPQD) and 384–405 (TMEV…PTPE). Coiled-coil stretches lie at residues 363–386 (TKGD…ATME) and 467–506 (QIQQ…LRAQ). The interval 524-549 (FAGDGSSGGSSEDPSSEEEAGEDRQQ) is disordered. Residues 573–662 (QELSASLARA…QAEELAVLTA (90 aa)) are a coiled coil.

Belongs to the MCC family. Interacts via its C-terminus with the first PDZ domain of USH1C.

The chain is Harmonin-binding protein USHBP1 from Mus musculus (Mouse).